The primary structure comprises 54 residues: ATP synthase protein 8 (54 aa).

The chain crosses the membrane as a helical span at residues 9-25 (WVFLFFLVWLVLGFLGL).

Belongs to the ATPase protein 8 family. In terms of assembly, F-type ATPases have 2 components, CF(1) - the catalytic core - and CF(0) - the membrane proton channel.

It localises to the mitochondrion membrane. In terms of biological role, mitochondrial membrane ATP synthase (F(1)F(0) ATP synthase or Complex V) produces ATP from ADP in the presence of a proton gradient across the membrane which is generated by electron transport complexes of the respiratory chain. F-type ATPases consist of two structural domains, F(1) - containing the extramembraneous catalytic core and F(0) - containing the membrane proton channel, linked together by a central stalk and a peripheral stalk. During catalysis, ATP synthesis in the catalytic domain of F(1) is coupled via a rotary mechanism of the central stalk subunits to proton translocation. Part of the complex F(0) domain. Minor subunit located with subunit a in the membrane. The polypeptide is ATP synthase protein 8 (MTATP8) (Branchiostoma floridae (Florida lancelet)).